The primary structure comprises 338 residues: Anthranilate phosphoribosyltransferase (338 aa).

Residues G78, 81–82 (GD), S86, 88–91 (NIST), 106–114 (KHGNKSITS), and S118 contribute to the 5-phospho-alpha-D-ribose 1-diphosphate site. G78 contributes to the anthranilate binding site. S90 provides a ligand contact to Mg(2+). N109 lines the anthranilate pocket. R163 is an anthranilate binding site. Mg(2+)-binding residues include D222 and E223.

Belongs to the anthranilate phosphoribosyltransferase family. As to quaternary structure, homodimer. The cofactor is Mg(2+).

The enzyme catalyses N-(5-phospho-beta-D-ribosyl)anthranilate + diphosphate = 5-phospho-alpha-D-ribose 1-diphosphate + anthranilate. Its pathway is amino-acid biosynthesis; L-tryptophan biosynthesis; L-tryptophan from chorismate: step 2/5. Catalyzes the transfer of the phosphoribosyl group of 5-phosphorylribose-1-pyrophosphate (PRPP) to anthranilate to yield N-(5'-phosphoribosyl)-anthranilate (PRA). This is Anthranilate phosphoribosyltransferase from Staphylococcus carnosus (strain TM300).